The primary structure comprises 258 residues: Protein OS-9 homolog (258 aa).

The signal sequence occupies residues 1 to 18 (MNWTSLVYLWFIFKSIFA). N-linked (GlcNAc...) asparagine glycans are attached at residues asparagine 2, asparagine 51, and asparagine 70. The MRH domain maps to 114-237 (TSCVFSFNLH…HINVPKLCSL (124 aa)). Cysteine 116 and cysteine 132 form a disulfide bridge. Residues tryptophan 127 and glutamine 139 each coordinate a mannooligosaccharide derivative. A glycan (N-linked (GlcNAc...) asparagine) is linked at asparagine 165. 2 disulfide bridges follow: cysteine 193–cysteine 223 and cysteine 208–cysteine 235. A mannooligosaccharide derivative is bound by residues aspartate 194, arginine 200, glutamate 219, and tyrosine 225.

Belongs to the OS-9 family. In terms of assembly, interacts with missfolded ER lumenal proteins.

It localises to the endoplasmic reticulum membrane. Lectin involved in the quality control of the secretory pathway. As a member of the endoplasmic reticulum-associated degradation lumenal (ERAD-L) surveillance system, targets misfolded endoplasmic reticulum lumenal glycoproteins for degradation. The polypeptide is Protein OS-9 homolog (YOS9) (Candida albicans (strain SC5314 / ATCC MYA-2876) (Yeast)).